A 187-amino-acid polypeptide reads, in one-letter code: Signal peptidase I U (187 aa).

The Cytoplasmic portion of the chain corresponds to 1–16 (MNAKTITLKKKRKIKT). Residues 17-37 (IVVLSIIMIAALIFTIRLVFY) form a helical membrane-spanning segment. The Extracellular segment spans residues 38 to 187 (KPFLIEGSSM…YPFGEMRQAK (150 aa)). Residues Ser46 and Lys88 contribute to the active site.

The protein belongs to the peptidase S26 family.

The protein resides in the cell membrane. It catalyses the reaction Cleavage of hydrophobic, N-terminal signal or leader sequences from secreted and periplasmic proteins.. This chain is Signal peptidase I U (sipU), found in Bacillus subtilis (strain 168).